The chain runs to 667 residues: Phosphomethylpyrimidine synthase (667 aa).

Substrate-binding positions include N235, M264, Y293, H329, S349–G351, D390–R393, and E429. Position 433 (H433) interacts with Zn(2+). Substrate is bound at residue Y456. H497 contacts Zn(2+). [4Fe-4S] cluster-binding residues include C577, C580, and C585. The tract at residues D618–S642 is disordered.

Belongs to the ThiC family. In terms of assembly, homodimer. It depends on [4Fe-4S] cluster as a cofactor.

It carries out the reaction 5-amino-1-(5-phospho-beta-D-ribosyl)imidazole + S-adenosyl-L-methionine = 4-amino-2-methyl-5-(phosphooxymethyl)pyrimidine + CO + 5'-deoxyadenosine + formate + L-methionine + 3 H(+). It functions in the pathway cofactor biosynthesis; thiamine diphosphate biosynthesis. In terms of biological role, catalyzes the synthesis of the hydroxymethylpyrimidine phosphate (HMP-P) moiety of thiamine from aminoimidazole ribotide (AIR) in a radical S-adenosyl-L-methionine (SAM)-dependent reaction. The protein is Phosphomethylpyrimidine synthase of Shewanella pealeana (strain ATCC 700345 / ANG-SQ1).